A 499-amino-acid chain; its full sequence is Glutelin type-A 1 (499 aa).

Positions 1-24 (MASINRPIVFFTVCLFLLCNGSLA) are cleaved as a signal peptide. 2 disulfide bridges follow: Cys46/Cys79 and Cys122/Cys313. 2 Cupin type-1 domains span residues 51–248 (LQAF…QVAR) and 319–468 (QNID…EEAQ).

The protein belongs to the 11S seed storage protein (globulins) family. As to quaternary structure, hexamer; each subunit is composed of an acidic and a basic chain derived from a single precursor and linked by a disulfide bond.

In terms of biological role, seed storage protein. The sequence is that of Glutelin type-A 1 (GLUA1) from Oryza sativa subsp. japonica (Rice).